The primary structure comprises 176 residues: Small ribosomal subunit protein uS5 (176 aa).

The S5 DRBM domain maps to 11-74; that stretch reads LSEVLVDVNR…QAAKKRMMKV (64 aa).

The protein belongs to the universal ribosomal protein uS5 family. As to quaternary structure, part of the 30S ribosomal subunit. Contacts proteins S4 and S8.

Its function is as follows. With S4 and S12 plays an important role in translational accuracy. In terms of biological role, located at the back of the 30S subunit body where it stabilizes the conformation of the head with respect to the body. The sequence is that of Small ribosomal subunit protein uS5 from Rickettsia africae (strain ESF-5).